Consider the following 227-residue polypeptide: Lipoprotein-releasing system ATP-binding protein LolD (227 aa).

The 219-residue stretch at 8-226 (IEVTNLCKSF…VVHMADGRIT (219 aa)) folds into the ABC transporter domain. 44–51 (GASGAGKT) is an ATP binding site.

The protein belongs to the ABC transporter superfamily. Lipoprotein translocase (TC 3.A.1.125) family. The complex is composed of two ATP-binding proteins (LolD) and two transmembrane proteins (LolC and LolE).

The protein resides in the cell inner membrane. Its function is as follows. Part of the ABC transporter complex LolCDE involved in the translocation of mature outer membrane-directed lipoproteins, from the inner membrane to the periplasmic chaperone, LolA. Responsible for the formation of the LolA-lipoprotein complex in an ATP-dependent manner. The polypeptide is Lipoprotein-releasing system ATP-binding protein LolD (Syntrophotalea carbinolica (strain DSM 2380 / NBRC 103641 / GraBd1) (Pelobacter carbinolicus)).